Consider the following 662-residue polypeptide: Forkhead box protein O1 (662 aa).

Disordered regions lie at residues 1 to 62 (MAEA…PSAS) and 122 to 165 (GCLH…SRRN). Phosphothreonine; by PKB/AKT1 or PKB/AKT2 and SGK1 is present on threonine 24. The span at 33–62 (SQSNSATSSPAPSGGAAANPDAAAGLPSAS) shows a compositional bias: low complexity. Positions 126 to 146 (PAPPQQPPPPGPLSQHPPVPP) are enriched in pro residues. Residues 167–261 (WGNLSYADLI…KSGKSPRRRA (95 aa)) constitute a DNA-binding region (fork-head). DNA-binding regions lie at residues 218 to 225 (NSIRHNLS) and 241 to 244 (SSWW). Serine 219 carries the post-translational modification Phosphoserine; by STK4/MST1. Residues serine 225, serine 241, and serine 242 each carry the phosphoserine modification. The tract at residues 241–342 (SSWWMLNPEG…GRLSPIMTEQ (102 aa)) is disordered. 2 positions are modified to N6-acetyllysine: lysine 252 and lysine 255. Serine 256 carries the phosphoserine; by CDK1 modification. Omega-N-methylarginine; by PRMT1 occurs at positions 258 and 260. A Nuclear localization signal motif is present at residues 258-260 (RRR). A Phosphoserine; by PKB/AKT1 and SGK1 modification is found at serine 263. Lysine 269, lysine 272, and lysine 281 each carry N6-acetyllysine. Over residues 271 to 282 (AKSRGRAAKKKA) the composition is skewed to basic residues. A sufficient for interaction with NLK region spans residues 290–570 (GAGDSPGSQF…RLTQEKTALQ (281 aa)). A phosphoserine mark is found at serine 294 and serine 305. Polar residues predominate over residues 316 to 333 (NWSTFRPRTSSNASTISG). A Phosphoserine; by PKB/AKT1 modification is found at serine 326. The residue at position 329 (serine 329) is a Phosphoserine; by CK1 and SGK1. Residue serine 332 is modified to Phosphoserine; by CK1. Residue serine 336 is modified to Phosphoserine; by DYRK1A. At threonine 340 the chain carries Phosphothreonine. A required for interaction with RUNX2 region spans residues 370–466 (SEISNPENME…GGMAQYNCAA (97 aa)). Lysine 430 is modified (N6-acetyllysine). Residues 469–473 (LKELL) carry the Required for interaction with SIRT1 motif.

In terms of assembly, interacts with LRPPRC. Interacts with RUNX2; the interaction inhibits RUNX2 transcriptional activity and mediates the IGF1/insulin-dependent BGLAP expression in osteoblasts Interacts with PPP2R1A; the interaction regulates the dephosphorylation of FOXO1 at Thr-24 and Ser-263 leading to its nuclear import. Interacts with NLK. Interacts with SIRT1; the interaction results in the deacetylation of FOXO1 leading to activation of FOXO1-mediated transcription of genes involved in DNA repair and stress resistance. Binds to CDK1. Interacts with the 14-3-3 proteins, YWHAG and YWHAZ; the interactions require insulin-stimulated phosphorylation on Thr-24, promote nuclear exit and loss of transcriptional activity. Interacts with SKP2; the interaction ubiquitinates FOXO1 leading to its proteasomal degradation. The interaction requires the presence of KRIT1. Interacts (via the C-terminal half) with ATF4 (via its DNA binding domain); the interaction occurs in osteoblasts, regulates glucose homeostasis via suppression of beta-cell proliferation and subsequent decrease in insulin production. Interacts with PRMT1; the interaction methylates FOXO1, prevents PKB/AKT1 phosphorylation and retains FOXO1 in the nucleus. Interacts with EP300 and CREBBP; the interactions acetylate FOXO1. Interacts with SIRT2; the interaction is disrupted in response to oxidative stress or serum deprivation, leading to increased level of acetylated FOXO1, which promotes stress-induced autophagy by stimulating E1-like activating enzyme ATG7. Interacts (acetylated form) with ATG7; the interaction is increased in response to oxidative stress or serum deprivation and promotes the autophagic process leading to cell death. Interacts (acetylated form) with PPARG. Interacts with XBP1; this interaction is direct and leads to FOXO1 ubiquitination and degradation via the proteasome pathway. Interacts (via the Fork-head domain) with CEBPA; the interaction increases when FOXO1 is deacetylated. Interacts with WDFY2. Forms a complex with WDFY2 and AKT1. Interacts with CRY1. Interacts with PPIA/CYPA; the interaction promotes FOXO1 dephosphorylation, nuclear accumulation and transcriptional activity. Interacts with TOX4; FOXO1 is required for full induction of TOX4-dependent activity and the interaction is inhibited by insulin. Interacts (when phosphorylated on Ser-263) with STUB1/CHIP. Phosphorylation by NLK promotes nuclear export and inhibits the transcriptional activity. In response to growth factors, phosphorylation on Thr-24, Ser-263 and Ser-326 by PKB/AKT1 promotes nuclear export and inactivation of transactivational activity. Phosphorylation on Thr-24 is required for binding 14-3-3 proteins. Phosphorylation of Ser-263 decreases DNA-binding activity and promotes the phosphorylation of Thr-24 and Ser-326, permitting phosphorylation of Ser-329 and Ser-332, probably by CDK1, leading to nuclear exclusion and loss of function. Stress signals, such as response to oxygen or nitric oxide, attenuate the PKB/AKT1-mediated phosphorylation leading to nuclear retention. Phosphorylation of Ser-336 is independent of IGF1 and leads to reduced function. Dephosphorylated on Thr-24 and Ser-263 by PP2A in beta-cells under oxidative stress leading to nuclear retention. Phosphorylation of Ser-256 by CDK1 disrupts binding of 14-3-3 proteins leading to nuclear accumulation and has no effect on DNA binding nor transcriptional activity. Phosphorylation by STK4/MST1 on Ser-219, upon oxidative stress, inhibits binding to 14-3-3 proteins and nuclear export. PPIA/CYPA promotes its dephosphorylation on Ser-263. In terms of processing, ubiquitinated by SKP2. Ubiquitination leads to proteasomal degradation. Ubiquitinated by STUB1/CHIP; when Ser-263 is phosphorylated. Post-translationally, methylation inhibits AKT1-mediated phosphorylation at Ser-263 and is increased by oxidative stress. Acetylated. Acetylation at Lys-269 and Lys-281 are necessary for autophagic cell death induction. Deacetylated by SIRT2 in response to oxidative stress or serum deprivation, thereby negatively regulating FOXO1-mediated autophagic cell death. Once in the nucleus, acetylated by CREBBP/EP300. Acetylation diminishes the interaction with target DNA and attenuates the transcriptional activity. It increases the phosphorylation at Ser-263. Deacetylation by SIRT1 results in reactivation of the transcriptional activity. Oxidative stress by hydrogen peroxide treatment appears to promote deacetylation and uncoupling of insulin-induced phosphorylation. By contrast, resveratrol acts independently of acetylation. Acetylated at Lys-430, promoting its localization to the nucleus and transcription factor activity. Deacetylation at Lys-430 by SIRT6, promotes its translocation into the cytoplasm, preventing its transcription factor activity. Deacetylation and subsequent inhibition by SIRT6 has different effects depending on cell types: it inhibits gluconeogenesis in hepatocytes, promotes glucose sensing in pancreatic beta-cells and regulates lipid catabolism in brown adipocytes. In terms of tissue distribution, highly in subcutaneous adipose and visceral adipose tissues. Levels higher in piglets than in adults. Also expressed at lower levels in liver and muscle.

It localises to the cytoplasm. Its subcellular location is the nucleus. Functionally, transcription factor that is the main target of insulin signaling and regulates metabolic homeostasis in response to oxidative stress. Binds to the insulin response element (IRE) with consensus sequence 5'-TT[G/A]TTTTG-3' and the related Daf-16 family binding element (DBE) with consensus sequence 5'-TT[G/A]TTTAC-3'. Activity suppressed by insulin. Main regulator of redox balance and osteoblast numbers and controls bone mass. Orchestrates the endocrine function of the skeleton in regulating glucose metabolism. Also acts as a key regulator of chondrogenic commitment of skeletal progenitor cells in response to lipid availability: when lipids levels are low, translocates to the nucleus and promotes expression of SOX9, which induces chondrogenic commitment and suppresses fatty acid oxidation. Acts synergistically with ATF4 to suppress osteocalcin/BGLAP activity, increasing glucose levels and triggering glucose intolerance and insulin insensitivity. Also suppresses the transcriptional activity of RUNX2, an upstream activator of osteocalcin/BGLAP. Acts as an inhibitor of glucose sensing in pancreatic beta cells by acting as a transcription repressor and suppressing expression of PDX1. In hepatocytes, promotes gluconeogenesis by acting together with PPARGC1A and CEBPA to activate the expression of genes such as IGFBP1, G6PC1 and PCK1. Also promotes gluconeogenesis by directly promoting expression of PPARGC1A and G6PC1. Important regulator of cell death acting downstream of CDK1, PKB/AKT1 and STK4/MST1. Promotes neural cell death. Mediates insulin action on adipose tissue. Regulates the expression of adipogenic genes such as PPARG during preadipocyte differentiation and, adipocyte size and adipose tissue-specific gene expression in response to excessive calorie intake. Regulates the transcriptional activity of GADD45A and repair of nitric oxide-damaged DNA in beta-cells. Required for the autophagic cell death induction in response to starvation or oxidative stress in a transcription-independent manner. Mediates the function of MLIP in cardiomyocytes hypertrophy and cardiac remodeling. Positive regulator of apoptosis in cardiac smooth muscle cells as a result of its transcriptional activation of pro-apoptotic genes. Regulates endothelial cell (EC) viability and apoptosis in a PPIA/CYPA-dependent manner via transcription of CCL2 and BCL2L11 which are involved in EC chemotaxis and apoptosis. In Sus scrofa (Pig), this protein is Forkhead box protein O1 (FOXO1).